A 150-amino-acid polypeptide reads, in one-letter code: FAD synthase (150 aa).

ATP contacts are provided by residues 10–11 (VF), 15–18 (HPGH), Asp97, and Tyr124.

It belongs to the archaeal FAD synthase family. In terms of assembly, homodimer. Requires a divalent metal cation as cofactor.

The catalysed reaction is FMN + ATP + H(+) = FAD + diphosphate. The protein operates within cofactor biosynthesis; FAD biosynthesis; FAD from FMN: step 1/1. Catalyzes the transfer of the AMP portion of ATP to flavin mononucleotide (FMN) to produce flavin adenine dinucleotide (FAD) coenzyme. This Methanopyrus kandleri (strain AV19 / DSM 6324 / JCM 9639 / NBRC 100938) protein is FAD synthase.